A 380-amino-acid polypeptide reads, in one-letter code: Cytochrome b (380 aa).

The next 4 helical transmembrane spans lie at phenylalanine 33 to methionine 53, tryptophan 77 to valine 98, tryptophan 113 to leucine 133, and phenylalanine 178 to leucine 198. Heme b is bound by residues histidine 83 and histidine 97. The heme b site is built by histidine 182 and histidine 196. Histidine 201 is a binding site for a ubiquinone. The next 4 membrane-spanning stretches (helical) occupy residues isoleucine 226–phenylalanine 246, leucine 288–asparagine 308, isoleucine 320–glycine 340, and phenylalanine 347–proline 367.

The protein belongs to the cytochrome b family. The cytochrome bc1 complex contains 11 subunits: 3 respiratory subunits (MT-CYB, CYC1 and UQCRFS1), 2 core proteins (UQCRC1 and UQCRC2) and 6 low-molecular weight proteins (UQCRH/QCR6, UQCRB/QCR7, UQCRQ/QCR8, UQCR10/QCR9, UQCR11/QCR10 and a cleavage product of UQCRFS1). This cytochrome bc1 complex then forms a dimer. Heme b is required as a cofactor.

The protein localises to the mitochondrion inner membrane. In terms of biological role, component of the ubiquinol-cytochrome c reductase complex (complex III or cytochrome b-c1 complex) that is part of the mitochondrial respiratory chain. The b-c1 complex mediates electron transfer from ubiquinol to cytochrome c. Contributes to the generation of a proton gradient across the mitochondrial membrane that is then used for ATP synthesis. The polypeptide is Cytochrome b (MT-CYB) (Microryzomys minutus (Forest small rice rat)).